We begin with the raw amino-acid sequence, 343 residues long: Mesaconyl-CoA hydratase (343 aa).

The region spanning 47 to 116 (SDEFARACGL…STVIGLKENS (70 aa)) is the MaoC-like domain. Substrate contacts are provided by residues 60–63 (PVDE), 83–86 (VANL), and 94–96 (LKP).

It carries out the reaction (2R,3S)-beta-methylmalyl-CoA = 2-methylfumaryl-CoA + H2O. Its function is as follows. Involved in the ethylmalonyl-CoA pathway for acetate assimilation. Catalyzes the reversible hydration of mesaconyl-CoA (2-methylfumaryl-CoA) to yield beta-methylmalyl-CoA ((2R,3S)-beta-methylmalyl-CoA). The polypeptide is Mesaconyl-CoA hydratase (mch) (Cereibacter sphaeroides (strain ATCC 17023 / DSM 158 / JCM 6121 / CCUG 31486 / LMG 2827 / NBRC 12203 / NCIMB 8253 / ATH 2.4.1.) (Rhodobacter sphaeroides)).